A 137-amino-acid polypeptide reads, in one-letter code: Small ribosomal subunit protein uS12 (137 aa).

Residues Met1–Phe28 are disordered. Asp102 bears the 3-methylthioaspartic acid mark.

The protein belongs to the universal ribosomal protein uS12 family. In terms of assembly, part of the 30S ribosomal subunit. Contacts proteins S8 and S17. May interact with IF1 in the 30S initiation complex.

Its function is as follows. With S4 and S5 plays an important role in translational accuracy. In terms of biological role, interacts with and stabilizes bases of the 16S rRNA that are involved in tRNA selection in the A site and with the mRNA backbone. Located at the interface of the 30S and 50S subunits, it traverses the body of the 30S subunit contacting proteins on the other side and probably holding the rRNA structure together. The combined cluster of proteins S8, S12 and S17 appears to hold together the shoulder and platform of the 30S subunit. The polypeptide is Small ribosomal subunit protein uS12 (Staphylococcus carnosus (strain TM300)).